The sequence spans 126 residues: UPF0102 protein BCAN_A0183 (126 aa).

This sequence belongs to the UPF0102 family.

This chain is UPF0102 protein BCAN_A0183, found in Brucella canis (strain ATCC 23365 / NCTC 10854 / RM-666).